The chain runs to 236 residues: Small ribosomal subunit protein uS2c (236 aa).

This sequence belongs to the universal ribosomal protein uS2 family.

The protein localises to the plastid. The protein resides in the chloroplast. This chain is Small ribosomal subunit protein uS2c (rps2), found in Amborella trichopoda.